A 152-amino-acid polypeptide reads, in one-letter code: Aspartate-rich protein (152 aa).

An N-terminal signal peptide occupies residues 1–19 (MQKLLLAVLFFSLLAVATA). Over residues 82-113 (ATPKTEAEPGSLDKGEGTKGEKGKEGKKEKGE) the composition is skewed to basic and acidic residues. The tract at residues 82-152 (ATPKTEAEPG…VHENDDENED (71 aa)) is disordered. Residues 135 to 152 (DDDDDRDDVHENDDENED) are compositionally biased toward acidic residues.

Prismatic layer of shell (at protein level). Expressed primarily in the mantle with highest level in the mantle edge and lower level in the mantle pallium.

It is found in the secreted. The polypeptide is Aspartate-rich protein (Margaritifera margaritifera (Freshwater pearl mussel)).